Reading from the N-terminus, the 269-residue chain is Fructose-2,6-bisphosphatase TIGAR (269 aa).

His11 functions as the Tele-phosphohistidine intermediate in the catalytic mechanism. Glu89 serves as the catalytic Proton donor/acceptor.

Belongs to the phosphoglycerate mutase family. In terms of assembly, interacts with HK2; the interaction increases hexokinase HK2 activity in a hypoxia- and HIF1A-dependent manner, resulting in the regulation of mitochondrial membrane potential, thus increasing NADPH production and decreasing intracellular ROS levels. As to expression, expressed in olfactory bulb, cerebellum, and cortex. Expressed in neurons and astrocytes (at protein level). Expressed in intestinal crypt.

It is found in the cytoplasm. The protein localises to the nucleus. Its subcellular location is the mitochondrion. The catalysed reaction is beta-D-fructose 2,6-bisphosphate + H2O = beta-D-fructose 6-phosphate + phosphate. Fructose-bisphosphatase hydrolyzing fructose-2,6-bisphosphate as well as fructose-1,6-bisphosphate. Acts as a negative regulator of glycolysis by lowering intracellular levels of fructose-2,6-bisphosphate in a p53/TP53-dependent manner, resulting in the pentose phosphate pathway (PPP) activation and NADPH production. Contributes to the generation of reduced glutathione to cause a decrease in intracellular reactive oxygen species (ROS) content, correlating with its ability to protect cells from oxidative or metabolic stress-induced cell death. Plays a role in promoting protection against cell death during hypoxia by decreasing mitochondria ROS levels in a HK2-dependent manner through a mechanism that is independent of its fructose-bisphosphatase activity. In response to cardiac damage stress, mediates p53-induced inhibition of myocyte mitophagy through ROS levels reduction and the subsequent inactivation of BNIP3. Reduced mitophagy results in an enhanced apoptotic myocyte cell death, and exacerbates cardiac damage. Plays a role in adult intestinal regeneration; contributes to the growth, proliferation and survival of intestinal crypts following tissue ablation. Plays a neuroprotective role against ischemic brain damage by enhancing PPP flux and preserving mitochondria functions. Protects glioma cells from hypoxia- and ROS-induced cell death by inhibiting glycolysis and activating mitochondrial energy metabolism and oxygen consumption in a TKTL1-dependent and p53/TP53-independent manner. Plays a role in cancer cell survival by promoting DNA repair through activating PPP flux in a CDK5-ATM-dependent signaling pathway during hypoxia and/or genome stress-induced DNA damage responses. Involved in intestinal tumor progression. This chain is Fructose-2,6-bisphosphatase TIGAR, found in Mus musculus (Mouse).